The sequence spans 241 residues: MSDGLQRCFVLHRRPYSESSLILDVFSEEYGRVTLMAKGARGKRSNLKGALQPFTPLLLKWSGNGSMKTLRQAEPISLGLPLSGVYLYSAMYINELVDRVLMPEVASPGLFHDYLFALTELAQSTNPEPALRRFELALLAAMGYGVDFLHCAGTGEPVSPDMTYRYREQKGFIASVRRDNLTFLGNELIAISERRFTSKEQLQAAKRFTRLALKPYLGGKPLKSRELFRQTTLPRARSTEE.

It belongs to the RecO family.

In terms of biological role, involved in DNA repair and RecF pathway recombination. The polypeptide is DNA repair protein RecO (Vibrio cholerae serotype O1 (strain ATCC 39541 / Classical Ogawa 395 / O395)).